We begin with the raw amino-acid sequence, 724 residues long: Disks large homolog 4 (724 aa).

S-palmitoyl cysteine attachment occurs at residues Cys-3 and Cys-5. The interval 15 to 35 (QDEDTPPLEHSPAHLPNQANS) is disordered. 2 PDZ domains span residues 65-151 (EITL…VMRR) and 160-246 (EIKL…VAKP). A phosphoserine mark is found at Ser-73 and Ser-142. Tyr-240 carries the phosphotyrosine modification. Ser-295 carries the phosphoserine modification. The region spanning 313–393 (RIVIHRGSTG…QTVTIIAQYK (81 aa)) is the PDZ 3 domain. Ser-415 and Ser-418 each carry phosphoserine. The residue at position 420 (Thr-420) is a Phosphothreonine. Ser-422, Ser-425, Ser-449, and Ser-480 each carry phosphoserine. The SH3 domain maps to 428-498 (KRGFYIRALF…PSKRRVERRE (71 aa)). A Guanylate kinase-like domain is found at 534–709 (ARPIIILGPT…IYHKVKRVIE (176 aa)). A Phosphotyrosine modification is found at Tyr-580. A phosphoserine mark is found at Ser-606 and Ser-654. Tyr-715 bears the Phosphotyrosine mark.

This sequence belongs to the MAGUK family. In terms of assembly, interacts through its PDZ domains with ANO2 and NETO1. Interacts through its first two PDZ domains with GRIN2A, GRIN2B, GRIN2C, GRIN2D. Interacts with ASIC3. Interacts with SEMA4C. Interacts with CXADR. Interacts with KCND2. Interacts with SYNGAP1. Interacts with LRRC4 and LRRC4B. Interacts with ERBB4. Interacts with KCNA1, KCNA2, KCNA3 and KCNA4. Interacts through its first PDZ domain with GRIK2, KCNA4 and CRIPT. Interacts through its second PDZ domain with the PDZ domain of NOS1 or the C-terminus of CAPON. Interacts through its third PDZ domain with NLGN1 and CRIPT, and probably with NLGN2 and NLGN3. Interacts through its guanylate kinase-like domain with KIF13B. Interacts through its guanylate kinase-like domain with DLGAP1/GKAP, DLGAP2, DLGAP3, DLGAP4, MAP1A, BEGAIN and SIPA1L1. Isoform 2 interacts through an L27 domain with HGS/HRS and the first L27 domain of CASK. Interacts with ADR1B and ANKS1B. May interact with HTR2A. Interacts with ADAM22. Interacts with KLHL17 and LGI1. Interacts with FRMPD4 (via C-terminus). Interacts with LRFN1, LRFN2 and LRFN4. Interacts (via N-terminal tandem pair of PDZ domains) with GPER1 (via C-terminus tail motif); the interaction is direct and induces the increase of GPER1 protein levels residing at the plasma membrane surface in a estradiol-independent manner. Interacts (via N-terminus tandem pair of PDZ domains) with NOS1 (via N-terminal domain). Interacts with SHANK3. Interacts with KCNJ4. Interacts with GPR85. Interacts with CACNG2 and MPP2 (via the SH3-Guanylate kinase-like sub-module). Interacts with ADGRB1. Found in a complex with PRR7 and GRIN1. Interacts (via PDZ3 domain and to lesser degree via PDZ2 domain) with PRR7. Component of the postsynaptic hippocampal AMPA-type glutamate receptor (AMPAR) complex, at least composed of pore forming AMPAR subunits GRIA1, GRIA2 and GRIA3 and AMPAR auxiliary proteins SHISA6 and SHISA7. Interacts (via its first two PDZ domains) with SHISA6 and SHISA7 (via PDZ-binding motif); the interaction is direct. Interacts with RPH3A and GRIN2A; this ternary complex regulates NMDA receptor composition at postsynaptic membranes. Interacts with ABR and BCR. Interacts with DGKI (via PDZ-binding motif); controls the localization of DGKI to the synapse. Interacts with C9orf72, SMCR8 and RAB39B. Interacts with ZDHHC5. Interacts with PTEN (via PDZ domain-binding motif); the interaction is induced by NMDA and is required for PTEN location at postsynaptic density. Found in a complex with GRIA1, GRIA2, GRIA3, GRIA4, CACNG8 and CNIH2. Interacts with FAM81A; the interaction facilitates condensate formation via liquid-liquid phase separation. Interacts with ADGRL3. Interacts with SORCS3. Post-translationally, palmitoylated. Palmitoylation is required for targeting to postsynaptic density, plasma membrane and synapses. Palmitoylation by ZDHHC2 occurs when the synaptic activity decreases and induces DLG4 synaptic clustering. Palmitoylation by ZDHHC15 regulates trafficking to the postsynaptic density and function in synaptogenesis. Palmitoylation may play a role in glutamate receptor GRIA1 synapse clustering. Depalmitoylated by ABHD17A and ABHD17B and to a lesser extent by ABHD17C, ABHD12, ABHD13, LYPLA1 and LYPLA2. Undergoes rapid synaptic palmitoylation/depalmitoylation cycles during neuronal development which slow down in mature neurons. Ubiquitinated by MDM2 in response to NMDA receptor activation, leading to proteasome-mediated degradation of DLG4 which is required for AMPA receptor endocytosis. Brain.

The protein localises to the cell membrane. It is found in the postsynaptic density. The protein resides in the synapse. It localises to the cytoplasm. Its subcellular location is the cell projection. The protein localises to the axon. It is found in the dendritic spine. The protein resides in the dendrite. It localises to the presynapse. Postsynaptic scaffolding protein that plays a critical role in synaptogenesis and synaptic plasticity by providing a platform for the postsynaptic clustering of crucial synaptic proteins. Interacts with the cytoplasmic tail of NMDA receptor subunits and shaker-type potassium channels. Required for synaptic plasticity associated with NMDA receptor signaling. Overexpression or depletion of DLG4 changes the ratio of excitatory to inhibitory synapses in hippocampal neurons. May reduce the amplitude of ASIC3 acid-evoked currents by retaining the channel intracellularly. May regulate the intracellular trafficking of ADR1B. Also regulates AMPA-type glutamate receptor (AMPAR) immobilization at postsynaptic density keeping the channels in an activated state in the presence of glutamate and preventing synaptic depression. Under basal conditions, cooperates with FYN to stabilize palmitoyltransferase ZDHHC5 at the synaptic membrane through FYN-mediated phosphorylation of ZDHHC5 and its subsequent inhibition of association with endocytic proteins. The protein is Disks large homolog 4 of Homo sapiens (Human).